A 437-amino-acid polypeptide reads, in one-letter code: Nuclear hormone receptor family member nhr-100 (437 aa).

A DNA-binding region (nuclear receptor) is located at residues Asp-21–Ser-96. NR C4-type zinc fingers lie at residues Cys-24 to Cys-44 and Cys-60 to Cys-79. One can recognise an NR LBD domain in the interval Gln-141–His-409.

The protein belongs to the nuclear hormone receptor family.

The protein resides in the nucleus. In terms of biological role, orphan nuclear receptor. The chain is Nuclear hormone receptor family member nhr-100 (nhr-100) from Caenorhabditis elegans.